A 34-amino-acid polypeptide reads, in one-letter code: Protamine-Y1/Y2 (34 aa).

Residues 1–34 (PRRRRQASRPVRRRRRYRRSTAARRRRRVVRRRR) are disordered.

Testis.

The protein resides in the nucleus. It is found in the chromosome. Functionally, protamines substitute for histones in the chromatin of sperm during the haploid phase of spermatogenesis. They compact sperm DNA into a highly condensed, stable and inactive complex. The protein is Protamine-Y1/Y2 of Thunnus thynnus (Atlantic bluefin tuna).